The chain runs to 438 residues: MGTIVKNVSIVTGQAEAPFIRHGYFKFADGVIVSVAEGTPSPEEIDRVEVIDGKGKWVMPGMINTHGHLGMSLLRGHSDDLPLQSWLTEKMWPFEGKMDREAVHHARQLAMAEMIKSGTTTFLEMYHLYMDDLAEAVVEQGPRAVLMRSMIGLCSESEQREKLKEAVTFATTWNGDGNGRITTMMAPHAPYTCPPSFIEMIVDEADRIDLPLHTHMAETQREVEEHRKTYGVHPLVHFEQLGFLKDRHWLLAHCVHLGEEELDILEQHPSVHVSHNPMSNLKLGSGIANVQSMLERGINICLGTDSVASNNHLDLVEEMRIAALLQKGAVLDPTAIPAETAIAMATKNGAKALRLPQVGTIEAGKRADFIMIDPQCLHLQPHEHVMSHLVYALKGADVQDVFVEGAPLMLNKELKTFDEEKLQFEANAHYQRICEKLK.

The Zn(2+) site is built by histidine 66 and histidine 68. Positions 95, 148, and 188 each coordinate substrate. A Zn(2+)-binding site is contributed by histidine 215. 2 residues coordinate substrate: glutamate 218 and aspartate 305. Aspartate 305 provides a ligand contact to Zn(2+).

It belongs to the metallo-dependent hydrolases superfamily. MTA/SAH deaminase family. Requires Zn(2+) as cofactor.

The enzyme catalyses S-adenosyl-L-homocysteine + H2O + H(+) = S-inosyl-L-homocysteine + NH4(+). It catalyses the reaction S-methyl-5'-thioadenosine + H2O + H(+) = S-methyl-5'-thioinosine + NH4(+). Functionally, catalyzes the deamination of 5-methylthioadenosine and S-adenosyl-L-homocysteine into 5-methylthioinosine and S-inosyl-L-homocysteine, respectively. Is also able to deaminate adenosine. The polypeptide is 5-methylthioadenosine/S-adenosylhomocysteine deaminase (Halalkalibacterium halodurans (strain ATCC BAA-125 / DSM 18197 / FERM 7344 / JCM 9153 / C-125) (Bacillus halodurans)).